Here is a 1385-residue protein sequence, read N- to C-terminus: Probable serine/threonine-protein kinase DDB_G0268876 (1385 aa).

One can recognise a Protein kinase domain in the interval 758-1008; it reads LELTKEIGRG…QQIITYLENL (251 aa). ATP is bound by residues 764-772 and lysine 785; that span reads IGRGVSGVV. Aspartate 878 functions as the Proton acceptor in the catalytic mechanism. 3 disordered regions span residues 1040–1074, 1091–1266, and 1287–1339; these read GGNS…ENKI, EVSK…SVGG, and ISSS…NNNN. Residues 1055–1073 show a composition bias toward polar residues; sequence VSGSNNNESSTAVSLNENK. Positions 1107–1144 are enriched in low complexity; that stretch reads SSSTSSSPSTLSAPQSPVGSTSPMGSTSTSPISNNNNR. The segment covering 1145–1162 has biased composition (basic and acidic residues); the sequence is PTHDHQQPHQVKWERIVP. Composition is skewed to low complexity over residues 1189-1232, 1242-1266, and 1295-1339; these read NNNN…SSGI, FLSS…SVGG, and NNNN…NNNN.

The protein belongs to the protein kinase superfamily. TKL Ser/Thr protein kinase family.

It carries out the reaction L-seryl-[protein] + ATP = O-phospho-L-seryl-[protein] + ADP + H(+). It catalyses the reaction L-threonyl-[protein] + ATP = O-phospho-L-threonyl-[protein] + ADP + H(+). In Dictyostelium discoideum (Social amoeba), this protein is Probable serine/threonine-protein kinase DDB_G0268876.